Here is a 105-residue protein sequence, read N- to C-terminus: UPF0145 protein lpg0197 (105 aa).

This sequence belongs to the UPF0145 family.

The protein is UPF0145 protein lpg0197 of Legionella pneumophila subsp. pneumophila (strain Philadelphia 1 / ATCC 33152 / DSM 7513).